The chain runs to 285 residues: NAD kinase (285 aa).

Residue aspartate 67 is the Proton acceptor of the active site. NAD(+) is bound by residues 67 to 68, 141 to 142, arginine 152, lysine 169, aspartate 171, 182 to 187, and glutamine 242; these read DG, ND, and TGYSLS.

It belongs to the NAD kinase family. The cofactor is a divalent metal cation.

Its subcellular location is the cytoplasm. The enzyme catalyses NAD(+) + ATP = ADP + NADP(+) + H(+). Functionally, involved in the regulation of the intracellular balance of NAD and NADP, and is a key enzyme in the biosynthesis of NADP. Catalyzes specifically the phosphorylation on 2'-hydroxyl of the adenosine moiety of NAD to yield NADP. This Trichlorobacter lovleyi (strain ATCC BAA-1151 / DSM 17278 / SZ) (Geobacter lovleyi) protein is NAD kinase.